The following is a 217-amino-acid chain: Harpin secretion protein HrcR (217 aa).

4 consecutive transmembrane segments (helical) span residues 11-31, 52-72, 158-178, and 185-205; these read FALF…CTCF, PNMA…APVF, IGFL…NVLL, and VAPM…INGW.

The protein belongs to the FliP/MopC/SpaP family.

The protein localises to the cell membrane. Its function is as follows. Required for the secretion of harpin. In Erwinia amylovora (Fire blight bacteria), this protein is Harpin secretion protein HrcR (hrcR).